Reading from the N-terminus, the 579-residue chain is Moesin a (579 aa).

One can recognise an FERM domain in the interval 5-295 (ISVRVTTMDA…GNHELYMRRR (291 aa)). A coiled-coil region spans residues 306 to 448 (KAQAKEEKNH…EDEALEWQTK (143 aa)). Disordered regions lie at residues 308–341 (QAKEEKNHKKMERALLEDERKKREQAEKEKEKIE), 376–418 (EQER…EHLA), and 464–519 (KNKV…KNER). Residues 376 to 400 (EQERKRAQEEAERLERERRLAEEAK) are compositionally biased toward basic and acidic residues. Over residues 490–501 (AEASAELTSAAA) the composition is skewed to low complexity. Positions 502–519 (YKDRSEEERMTEAEKNER) are enriched in basic and acidic residues. A coiled-coil region spans residues 517–551 (NERVQKHLLALTSELANARDETKKTQNDIIHAENV).

The protein resides in the cell membrane. It is found in the cell junction. Positively regulates endothelial adherens junction formation and stabilization. Is thereby required for intersegmental vessel luminal membrane formation and stabilization during tubulogenesis in the early stages of development, independent of blood flow dynamics. This chain is Moesin a, found in Danio rerio (Zebrafish).